We begin with the raw amino-acid sequence, 198 residues long: Putative 3-methyladenine DNA glycosylase (198 aa).

The protein belongs to the DNA glycosylase MPG family.

The protein is Putative 3-methyladenine DNA glycosylase of Natranaerobius thermophilus (strain ATCC BAA-1301 / DSM 18059 / JW/NM-WN-LF).